A 209-amino-acid chain; its full sequence is Uridine kinase (209 aa).

Residue 12–19 participates in ATP binding; the sequence is GGSGSGKT.

Belongs to the uridine kinase family.

The protein localises to the cytoplasm. It carries out the reaction uridine + ATP = UMP + ADP + H(+). The enzyme catalyses cytidine + ATP = CMP + ADP + H(+). It functions in the pathway pyrimidine metabolism; CTP biosynthesis via salvage pathway; CTP from cytidine: step 1/3. The protein operates within pyrimidine metabolism; UMP biosynthesis via salvage pathway; UMP from uridine: step 1/1. This is Uridine kinase from Listeria welshimeri serovar 6b (strain ATCC 35897 / DSM 20650 / CCUG 15529 / CIP 8149 / NCTC 11857 / SLCC 5334 / V8).